The following is a 277-amino-acid chain: Uridine phosphorylase (277 aa).

The protein belongs to the PNP/UDP phosphorylase family.

It is found in the cytoplasm. It carries out the reaction uridine + phosphate = alpha-D-ribose 1-phosphate + uracil. It participates in pyrimidine metabolism; UMP biosynthesis via salvage pathway; uracil from uridine (phosphorylase route): step 1/1. Its function is as follows. Catalyzes the reversible phosphorylytic cleavage of uridine to uracil and ribose-1-phosphate. In Thermococcus kodakarensis (strain ATCC BAA-918 / JCM 12380 / KOD1) (Pyrococcus kodakaraensis (strain KOD1)), this protein is Uridine phosphorylase.